The primary structure comprises 91 residues: PqqA binding protein (91 aa).

The protein belongs to the PqqD family. Monomer. Interacts with PqqE.

The protein operates within cofactor biosynthesis; pyrroloquinoline quinone biosynthesis. Functionally, functions as a PqqA binding protein and presents PqqA to PqqE, in the pyrroloquinoline quinone (PQQ) biosynthetic pathway. The protein is PqqA binding protein of Pseudomonas entomophila (strain L48).